The sequence spans 388 residues: Mitochondrial distribution and morphology protein 12 (388 aa).

The SMP-LTD domain occupies 1 to 388; it reads MSLDINWSLL…VFPNFHTVAL (388 aa). Disordered stretches follow at residues 75–101 and 209–249; these read DDEG…RNEA and PMSI…KVSS. Residues 83–101 show a composition bias toward basic and acidic residues; the sequence is EEKQREKEREERDKLRNEA. Over residues 234 to 243 the composition is skewed to pro residues; it reads PSPPAHPAGL.

The protein belongs to the MDM12 family. As to quaternary structure, component of the ER-mitochondria encounter structure (ERMES) or MDM complex, composed of MMM1, MDM10, MDM12 and MDM34. An MMM1 homodimer associates with one molecule of MDM12 on each side in a pairwise head-to-tail manner, and the SMP-LTD domains of MMM1 and MDM12 generate a continuous hydrophobic tunnel for phospholipid trafficking.

Its subcellular location is the mitochondrion outer membrane. It is found in the endoplasmic reticulum membrane. Functionally, component of the ERMES/MDM complex, which serves as a molecular tether to connect the endoplasmic reticulum (ER) and mitochondria. Components of this complex are involved in the control of mitochondrial shape and protein biogenesis, and function in nonvesicular lipid trafficking between the ER and mitochondria. MDM12 is required for the interaction of the ER-resident membrane protein MMM1 and the outer mitochondrial membrane-resident beta-barrel protein MDM10. The MDM12-MMM1 subcomplex functions in the major beta-barrel assembly pathway that is responsible for biogenesis of all mitochondrial outer membrane beta-barrel proteins, and acts in a late step after the SAM complex. The MDM10-MDM12-MMM1 subcomplex further acts in the TOM40-specific pathway after the action of the MDM12-MMM1 complex. Essential for establishing and maintaining the structure of mitochondria and maintenance of mtDNA nucleoids. The polypeptide is Mitochondrial distribution and morphology protein 12 (Cryptococcus neoformans var. neoformans serotype D (strain JEC21 / ATCC MYA-565) (Filobasidiella neoformans)).